Here is a 91-residue protein sequence, read N- to C-terminus: MLTGYSLRFLKEALTIHHGDINPPALNGSPCRLNEPDVCQLILDEFKLITVIGDGFTCQWVLKTHHIHRLFFYFVVFCDINHINIVPIIIP.

The chain is Putative protein p22 (22) from Escherichia coli (Bacteriophage APSE-1).